The chain runs to 87 residues: Translation initiation factor IF-1 2 (87 aa).

An S1-like domain is found at 1–72 (MAKEELLELD…TKGRINFRHK (72 aa)).

This sequence belongs to the IF-1 family. As to quaternary structure, component of the 30S ribosomal translation pre-initiation complex which assembles on the 30S ribosome in the order IF-2 and IF-3, IF-1 and N-formylmethionyl-tRNA(fMet); mRNA recruitment can occur at any time during PIC assembly.

Its subcellular location is the cytoplasm. Its function is as follows. One of the essential components for the initiation of protein synthesis. Stabilizes the binding of IF-2 and IF-3 on the 30S subunit to which N-formylmethionyl-tRNA(fMet) subsequently binds. Helps modulate mRNA selection, yielding the 30S pre-initiation complex (PIC). Upon addition of the 50S ribosomal subunit IF-1, IF-2 and IF-3 are released leaving the mature 70S translation initiation complex. In Burkholderia ambifaria (strain ATCC BAA-244 / DSM 16087 / CCUG 44356 / LMG 19182 / AMMD) (Burkholderia cepacia (strain AMMD)), this protein is Translation initiation factor IF-1 2.